The chain runs to 291 residues: Ribosomal large subunit pseudouridine synthase B (291 aa).

Residues 3 to 63 (EKLQKVLARA…GHLISVKESA (61 aa)) enclose the S4 RNA-binding domain. The active-site Nucleophile is the D110. A disordered region spans residues 272 to 291 (VKRHSQIAGGRRSGGRNNNG).

This sequence belongs to the pseudouridine synthase RsuA family.

The enzyme catalyses uridine(2605) in 23S rRNA = pseudouridine(2605) in 23S rRNA. In terms of biological role, responsible for synthesis of pseudouridine from uracil-2605 in 23S ribosomal RNA. This Salmonella typhi protein is Ribosomal large subunit pseudouridine synthase B (rluB).